The chain runs to 552 residues: Chaperonin GroEL (552 aa).

ATP is bound by residues 30–33 (TLGP), K51, 87–91 (DGTTT), G415, 479–481 (NAA), and D495.

The protein belongs to the chaperonin (HSP60) family. Forms a cylinder of 14 subunits composed of two heptameric rings stacked back-to-back. Interacts with the co-chaperonin GroES.

The protein resides in the cytoplasm. The catalysed reaction is ATP + H2O + a folded polypeptide = ADP + phosphate + an unfolded polypeptide.. Functionally, together with its co-chaperonin GroES, plays an essential role in assisting protein folding. The GroEL-GroES system forms a nano-cage that allows encapsulation of the non-native substrate proteins and provides a physical environment optimized to promote and accelerate protein folding. In Nitrosospira multiformis (strain ATCC 25196 / NCIMB 11849 / C 71), this protein is Chaperonin GroEL.